A 554-amino-acid polypeptide reads, in one-letter code: Laccase-8 (554 aa).

The signal sequence occupies residues 1–21; sequence MASAAMLVPLVLVLCTAAASA. Plastocyanin-like domains follow at residues 29 to 145 and 156 to 309; these read KVGG…PRNG and EEIP…YKGV. The Cu cation site is built by His-79 and His-81. 2 N-linked (GlcNAc...) asparagine glycosylation sites follow: Asn-107 and Asn-113. Residues His-124 and His-126 each coordinate Cu cation. N-linked (GlcNAc...) asparagine glycosylation is found at Asn-271 and Asn-369. The region spanning 411–537 is the Plastocyanin-like 3 domain; the sequence is DFPDFPPPMQ…AMVFEVLNGP (127 aa). Residues His-455, His-458, His-460, His-516, Cys-517, His-518, and His-522 each contribute to the Cu cation site.

The protein belongs to the multicopper oxidase family. Cu cation is required as a cofactor.

The protein localises to the secreted. It localises to the extracellular space. Its subcellular location is the apoplast. The catalysed reaction is 4 hydroquinone + O2 = 4 benzosemiquinone + 2 H2O. Functionally, lignin degradation and detoxification of lignin-derived products. The sequence is that of Laccase-8 (LAC8) from Oryza sativa subsp. japonica (Rice).